Reading from the N-terminus, the 427-residue chain is ATP-sensitive inward rectifier potassium channel 12 (427 aa).

The Cytoplasmic portion of the chain corresponds to 1–77 (MTAASRANPY…LADMFTTCVD (77 aa)). C75 carries the post-translational modification S-nitrosocysteine. The helical transmembrane segment at 78–104 (IRWRYMLLIFSLAFLASWLLFGIIFWV) threads the bilayer. Residues R79 and R81 each contribute to the a 1,2-diacyl-sn-glycero-3-phospho-(1D-myo-inositol-4,5-bisphosphate) site. Residues 105–129 (IAVAHGDLEPAEGRGRTPCVLQVHG) lie on the Extracellular side of the membrane. The cysteines at positions 123 and 155 are disulfide-linked. Residues 130–146 (FMAAFLFSIETQTTIGY) constitute an intramembrane region (helical; Pore-forming). 4 residues coordinate K(+): T143, I144, G145, and Y146. The short motif at 143-148 (TIGYGL) is the Selectivity filter element. Residues 147-155 (GLRCVTEEC) lie on the Extracellular side of the membrane. A helical transmembrane segment spans residues 156–183 (PVAVFMVVAQSIVGCIIDSFMIGAIMAK). A 1,2-diacyl-sn-glycero-3-phospho-(1D-myo-inositol-4,5-bisphosphate) is bound by residues K183 and K188. Residues 184-427 (MGRPKKRAQT…ERPYRRESEI (244 aa)) lie on the Cytoplasmic side of the membrane. The disordered stretch occupies residues 387 to 427 (DEEDEVATDRDGRSPQPEHDFDRLQASSGALERPYRRESEI). A compositionally biased stretch (basic and acidic residues) spans 393–409 (ATDRDGRSPQPEHDFDR). A PDZ-binding motif is present at residues 425–427 (SEI).

It belongs to the inward rectifier-type potassium channel (TC 1.A.2.1) family. KCNJ12 subfamily. Homotetramer. Forms heteromer with KCNJ4. Can form heteromeric channels with Kir2.6/KCNJ18. Association, via its PDZ-recognition domain, with LIN7A, LIN7B, LIN7C, DLG1, CASK and APBA1 plays a key role in its localization and trafficking. Highest level in cerebellum. Moderately found in kidney, forebrain and skeletal muscle. Not detected in uterus, liver and pancreas.

Its subcellular location is the membrane. The protein resides in the cell membrane. It is found in the sarcolemma. It localises to the T-tubule. It catalyses the reaction K(+)(in) = K(+)(out). Its activity is regulated as follows. Activated by phosphatidylinositol 4,5-biphosphate (PtdIns(4,5)P2). PtdIns(4,5)P2 binding to the cytoplasmic side of the channel triggers a conformation change leading to channel opening. Inhibited by Ba(2+). Inward rectifying potassium channel that probably participates in controlling the resting membrane potential in electrically excitable cells. It probably participates in establishing action potential waveform and excitability of neuronal and muscle tissues. Inward rectifier potassium channels are characterized by a greater tendency to allow potassium to flow into the cell rather than out of it. Their voltage dependence is regulated by the concentration of extracellular potassium; as external potassium is raised, the voltage range of the channel opening shifts to more positive voltages. The inward rectification is mainly due to the blockage of outward current by internal magnesium. In Rattus norvegicus (Rat), this protein is ATP-sensitive inward rectifier potassium channel 12 (Kcnj12).